Here is a 277-residue protein sequence, read N- to C-terminus: tRNA uridine(34) hydroxylase (277 aa).

In terms of domain architecture, Rhodanese spans 126–221; the sequence is SSPDVHVIDT…YLETVRGDDS (96 aa). Cysteine 181 serves as the catalytic Cysteine persulfide intermediate.

Belongs to the TrhO family.

The catalysed reaction is uridine(34) in tRNA + AH2 + O2 = 5-hydroxyuridine(34) in tRNA + A + H2O. Catalyzes oxygen-dependent 5-hydroxyuridine (ho5U) modification at position 34 in tRNAs. The protein is tRNA uridine(34) hydroxylase of Anaplasma marginale (strain Florida).